A 93-amino-acid polypeptide reads, in one-letter code: Sm-like protein LSM2 (93 aa).

A Sm domain is found at 2–76 (LFFSYFKDLV…VRYVQLPKDG (75 aa)).

It belongs to the snRNP Sm proteins family. Component of the heptameric LSM1-LSM7 complex that forms a seven-membered ring structure with a donut shape. The LSM subunits are arranged in the order LSM1, LSM2, LSM3, LSM6, LSM5, LSM7 and LSM4. LSM2 subunit interacts only with its two neighboring subunits, LSM1A or LSM1B and LSM3A or LSM3B. Component of the heptameric LSM2-LSM8 complex that forms a seven-membered ring structure with a donut shape. The LSM subunits are arranged in the order LSM8, LSM2, LSM3, LSM6, LSM5, LSM7 and LSM4. LSM2 subunit interacts only with its two neighboring subunits, LSM8 and LSM3A or LSM3B. Expressed in roots, leaves, stems, flowers and siliques.

The protein resides in the cytoplasm. The protein localises to the nucleus. Functionally, component of LSM protein complexes, which are involved in RNA processing. Component of the cytoplasmic LSM1-LSM7 complex which is involved in mRNA degradation by promoting decapping and leading to accurate 5'-3' mRNA decay. The cytoplasmic LSM1-LSM7 complex regulates developmental gene expression by the decapping of specific development-related transcripts. Component of the nuclear LSM2-LSM8 complex which is involved splicing nuclear mRNAs. LSM2-LSM8 binds directly to the U6 small nuclear RNAs (snRNAs) and is essential for accurate splicing of selected development-related mRNAs through the stabilization of the spliceosomal U6 snRNA. Plays a critical role in the regulation of development-related gene expression. The protein is Sm-like protein LSM2 of Arabidopsis thaliana (Mouse-ear cress).